The chain runs to 151 residues: Large ribosomal subunit protein bL9 (151 aa).

Belongs to the bacterial ribosomal protein bL9 family.

Functionally, binds to the 23S rRNA. This chain is Large ribosomal subunit protein bL9, found in Kosmotoga olearia (strain ATCC BAA-1733 / DSM 21960 / TBF 19.5.1).